Here is a 452-residue protein sequence, read N- to C-terminus: Bone morphogenetic protein 5 (452 aa).

Positions 1 to 25 (MHWTVFLLRGIVGFLWSGWVQVGYA) are cleaved as a signal peptide. The propeptide occupies 26–314 (KGGLGDNHVH…ASEVLLRSVR (289 aa)). N209, N325, N343, and N393 each carry an N-linked (GlcNAc...) asparagine glycan. Residues 316–345 (ASKRKNQNRNKSNSHQDPSRMPSAGDYNTS) form a disordered region. Cystine bridges form between C351–C417, C380–C449, and C384–C451.

It belongs to the TGF-beta family. Interacts with ERFE; the interaction inhibits BMP-induced transcription of HAMP.

The protein localises to the secreted. In terms of biological role, growth factor of the TGF-beta superfamily that plays essential roles in many developmental processes, including cartilage and bone formation or neurogenesis. Initiates the canonical BMP signaling cascade by associating with type I receptor BMPR1A and type II receptor BMPR2. In turn, BMPR1A propagates signal by phosphorylating SMAD1/5/8 that travel to the nucleus and act as activators and repressors of transcription of target genes. Can also signal through non-canonical pathway such as MAPK p38 signaling cascade to promote chondrogenic differentiation. Promotes the expression of HAMP, this is repressed by its interaction with ERFE. The chain is Bone morphogenetic protein 5 (Bmp5) from Mus musculus (Mouse).